We begin with the raw amino-acid sequence, 76 residues long: Small ribosomal subunit protein bS18 (76 aa).

It belongs to the bacterial ribosomal protein bS18 family. As to quaternary structure, part of the 30S ribosomal subunit. Forms a tight heterodimer with protein bS6.

Its function is as follows. Binds as a heterodimer with protein bS6 to the central domain of the 16S rRNA, where it helps stabilize the platform of the 30S subunit. The protein is Small ribosomal subunit protein bS18 of Oceanobacillus iheyensis (strain DSM 14371 / CIP 107618 / JCM 11309 / KCTC 3954 / HTE831).